The primary structure comprises 141 residues: Hemoglobin subunit alpha (141 aa).

Positions 1-141 (VLSASDKTNL…VSTVLTSKYR (141 aa)) constitute a Globin domain. Residue Ser-3 is modified to Phosphoserine. Position 7 is an N6-succinyllysine (Lys-7). The residue at position 8 (Thr-8) is a Phosphothreonine. Lys-11 bears the N6-succinyllysine mark. At Lys-16 the chain carries N6-acetyllysine; alternate. Position 16 is an N6-succinyllysine; alternate (Lys-16). Tyr-24 bears the Phosphotyrosine mark. Ser-35 carries the post-translational modification Phosphoserine. Lys-40 bears the N6-succinyllysine mark. Residue Ser-49 is modified to Phosphoserine. O2 is bound at residue His-58. His-87 serves as a coordination point for heme b. At Ser-102 the chain carries Phosphoserine. Thr-108 carries the post-translational modification Phosphothreonine. Ser-124 is subject to Phosphoserine. Phosphothreonine occurs at positions 134 and 137. Ser-138 is subject to Phosphoserine.

It belongs to the globin family. In terms of assembly, heterotetramer of two alpha chains and two beta chains. In terms of tissue distribution, red blood cells.

Its function is as follows. Involved in oxygen transport from the lung to the various peripheral tissues. This chain is Hemoglobin subunit alpha, found in Blarina brevicauda (Northern short-tailed shrew).